The sequence spans 660 residues: Probable serine/threonine-protein kinase CE0033 (660 aa).

The 270-residue stretch at 9 to 278 (YELGASIGSG…AEMAADLELL (270 aa)) folds into the Protein kinase domain. ATP contacts are provided by residues 15 to 23 (IGSGGMSEV) and Lys-38. The active-site Proton acceptor is Asp-136. A disordered region spans residues 288-319 (RAHVEKPDEPETVVVPQRLSTPPPPPTPAMPA). 3 consecutive PASTA domains span residues 377-443 (SAST…TISS), 444-512 (GREV…TVST), and 513-577 (GPSL…EISN).

It belongs to the protein kinase superfamily. Ser/Thr protein kinase family.

It carries out the reaction L-seryl-[protein] + ATP = O-phospho-L-seryl-[protein] + ADP + H(+). The enzyme catalyses L-threonyl-[protein] + ATP = O-phospho-L-threonyl-[protein] + ADP + H(+). The polypeptide is Probable serine/threonine-protein kinase CE0033 (Corynebacterium efficiens (strain DSM 44549 / YS-314 / AJ 12310 / JCM 11189 / NBRC 100395)).